The following is a 383-amino-acid chain: Caspase a (383 aa).

Positions 1–142 (MAKSIKDHLQ…ETYEIKDKSV (142 aa)) are excised as a propeptide. Positions 8–81 (HLQDALSNIG…RGIKCNAVAE (74 aa)) constitute a Pyrin domain. Residues 87-106 (TGQGGVSQPEPPVPEPIPKD) form a disordered region. Active-site residues include histidine 220 and cysteine 270. Residues 275–296 (HGRVWASDGEPDEPIEIEDDDF) constitute a propeptide that is removed on maturation.

This sequence belongs to the peptidase C14A family. Heterotetramer that consists of two anti-parallel arranged heterodimers, each one formed by a 20 kDa (p20) and a 10 kDa (p10) subunit. Interacts (via pyrin domain) with pycard (via pyrin domain). Interacts with caspb. Component of NLRP1 inflammasomes. Inflammasomes are supramolecular complexes that assemble in the cytosol in response to pathogens and other damage-associated signals and play critical roles in innate immunity and inflammation. The NLRP1 inflammasome is composed of the signal sensor nlrp1, and the adapter pycard (asc), which recruit effector pro-inflammatory caspases caspa and/or caspb. The interaction between nlrp1 and pycard is required for the sequential recruitment of caspa and then caspb. Caspa is preferentially recruited first and this causes the cleavage of pro-il1b into the midformed il1b. This is followed by the recruitment of caspb, which is activated and cleaves the midformed il1b resulting in il1b maturation. Interacts with caiap. The two subunits are derived from the precursor sequence by an autocatalytic mechanism.

The protein resides in the inflammasome. Its subcellular location is the cytoplasm. The enzyme catalyses Strict requirement for an Asp residue at position P1 and has a preferred cleavage sequence of Tyr-Val-Ala-Asp-|-.. In terms of biological role, thiol protease which cleaves IL-1 beta (il1b), releasing the mature cytokine which is involved in a variety of inflammatory processes, and mediates apoptosis. Component of the NLRP1 inflammasome, which plays a crucial role in innate immunity and inflammation. In response to pathogens and other damage-associated signals, recruited to the NLRP1 inflammasome in its precursor form. Its subsequent activation causes the cleavage of pro-il1b into the midformed il1b, which then evetually leads to il1b maturation and secretion in the extracellular milieu. Required for the development of the cartilaginous pharyngeal skeleton. The chain is Caspase a from Danio rerio (Zebrafish).